Reading from the N-terminus, the 306-residue chain is Dermonecrotic toxin LiSicTox-alphaIA1a (306 aa).

Positions 1-18 (MLPYIVLVLGCWSVLSQA) are cleaved as a signal peptide. The propeptide occupies 19-26 (AQTDDEER). The active site involves His38. 2 residues coordinate Mg(2+): Glu58 and Asp60. Residue His74 is the Nucleophile of the active site. 2 disulfide bridges follow: Cys78-Cys84 and Cys80-Cys223. Position 118 (Asp118) interacts with Mg(2+).

This sequence belongs to the arthropod phospholipase D family. Class II subfamily. Class IIa sub-subfamily. Requires Mg(2+) as cofactor. As to expression, expressed by the venom gland.

The protein localises to the secreted. It carries out the reaction an N-(acyl)-sphingosylphosphocholine = an N-(acyl)-sphingosyl-1,3-cyclic phosphate + choline. The enzyme catalyses an N-(acyl)-sphingosylphosphoethanolamine = an N-(acyl)-sphingosyl-1,3-cyclic phosphate + ethanolamine. It catalyses the reaction a 1-acyl-sn-glycero-3-phosphocholine = a 1-acyl-sn-glycero-2,3-cyclic phosphate + choline. The catalysed reaction is a 1-acyl-sn-glycero-3-phosphoethanolamine = a 1-acyl-sn-glycero-2,3-cyclic phosphate + ethanolamine. It carries out the reaction 1-hexadecanoyl-sn-glycero-3-phosphocholine = 1-hexadecanoyl-sn-glycero-2,3-cyclic phosphate + choline. With respect to regulation, catalytic activity and hemolysis are inhibited by divalent ion chelators (1,10-phenanthroline, EDTA, and EGTA). Dermonecrotic toxins cleave the phosphodiester linkage between the phosphate and headgroup of certain phospholipids (sphingolipid and lysolipid substrates), forming an alcohol (often choline) and a cyclic phosphate. This toxin acts on sphingomyelin (SM) with high activity. It discriminate between the number of carbon atoms in the substrates, since it prefers SM with six carbons in the fatty acid chain (SM6:0) to other SMs (SM12:0 &gt; SM16:0 &gt; SM18:0 &gt; SM2:0 &gt; SM24:0). It also acts on lysophosphatidylcholine (LPC) (LPC16:0 = LPC12:0 &gt; LPC18:0), and lyso-platelet activating factor (LPAF, an alkyl-LPC) but not on phosphatidylcholine (PC). It may also act on ceramide phosphoethanolamine (CPE), lysophosphatidylcholine (LPC) and lysophosphatidylethanolamine (LPE), but not on lysophosphatidylserine (LPS), and lysophosphatidylglycerol (LPG). It acts by transphosphatidylation, releasing exclusively cyclic phosphate products as second products. In vivo, it induces dermonecrosis, vascular permeability, platelet aggregation, inflammatory response, edema and cytotoxicity against renal epithelial cells. It causes direct nephrotoxicity and is directly toxic to liver. It also induces hemolysis in a complement-dependent manner as well as in a complement-independent manner. The hemolysis provoked in a complement-independent manner is composed of several steps. The toxin binds to erythrocyte membranes, hydrolyzes membrane phospholipids (SM and LPC) thus generating metabolism products that cause hemolysis, probably by provoking an increase of calcium inside cells. The calcium influx is due to the opening of L-type calcium channels, since L-type calcium channel blockers inhibit calcium influx. Is lethal to mice when intraperitoneally injected. The polypeptide is Dermonecrotic toxin LiSicTox-alphaIA1a (Loxosceles intermedia (Brown spider)).